A 228-amino-acid chain; its full sequence is Probable septum site-determining protein MinC (228 aa).

Belongs to the MinC family. In terms of assembly, interacts with MinD and FtsZ.

Functionally, cell division inhibitor that blocks the formation of polar Z ring septums. Rapidly oscillates between the poles of the cell to destabilize FtsZ filaments that have formed before they mature into polar Z rings. Prevents FtsZ polymerization. This Pectobacterium atrosepticum (strain SCRI 1043 / ATCC BAA-672) (Erwinia carotovora subsp. atroseptica) protein is Probable septum site-determining protein MinC.